A 287-amino-acid chain; its full sequence is Putative ABC transporter ATP-binding protein MM_1038 (287 aa).

One can recognise an ABC transporter domain in the interval 5–238 (LENISVFYSR…ENVPLPPVAS (234 aa)). 40–47 (GEKGAGKS) contacts ATP.

Belongs to the ABC transporter superfamily.

Its subcellular location is the cell membrane. Functionally, probably part of an ABC transporter complex. Responsible for energy coupling to the transport system. This Methanosarcina mazei (strain ATCC BAA-159 / DSM 3647 / Goe1 / Go1 / JCM 11833 / OCM 88) (Methanosarcina frisia) protein is Putative ABC transporter ATP-binding protein MM_1038.